Here is a 157-residue protein sequence, read N- to C-terminus: 6,7-dimethyl-8-ribityllumazine synthase (157 aa).

Residues phenylalanine 23, 57–59 (AFE), and 81–83 (AVI) each bind 5-amino-6-(D-ribitylamino)uracil. 86-87 (ST) is a binding site for (2S)-2-hydroxy-3-oxobutyl phosphate. Residue histidine 89 is the Proton donor of the active site. Phenylalanine 114 provides a ligand contact to 5-amino-6-(D-ribitylamino)uracil. Arginine 128 lines the (2S)-2-hydroxy-3-oxobutyl phosphate pocket.

Belongs to the DMRL synthase family.

The catalysed reaction is (2S)-2-hydroxy-3-oxobutyl phosphate + 5-amino-6-(D-ribitylamino)uracil = 6,7-dimethyl-8-(1-D-ribityl)lumazine + phosphate + 2 H2O + H(+). It functions in the pathway cofactor biosynthesis; riboflavin biosynthesis; riboflavin from 2-hydroxy-3-oxobutyl phosphate and 5-amino-6-(D-ribitylamino)uracil: step 1/2. Catalyzes the formation of 6,7-dimethyl-8-ribityllumazine by condensation of 5-amino-6-(D-ribitylamino)uracil with 3,4-dihydroxy-2-butanone 4-phosphate. This is the penultimate step in the biosynthesis of riboflavin. This Desulfosudis oleivorans (strain DSM 6200 / JCM 39069 / Hxd3) (Desulfococcus oleovorans) protein is 6,7-dimethyl-8-ribityllumazine synthase.